Reading from the N-terminus, the 199-residue chain is Probable GTP-binding protein EngB (199 aa).

The EngB-type G domain maps to 28–199 (DLPEVALAGR…EAWDTILAEL (172 aa)). Residues 36-43 (GRSNVGKS), 63-67 (GKTQL), 81-84 (DVPG), 148-151 (TKAD), and 180-182 (FSS) each bind GTP. Residues Ser43 and Thr65 each contribute to the Mg(2+) site.

The protein belongs to the TRAFAC class TrmE-Era-EngA-EngB-Septin-like GTPase superfamily. EngB GTPase family. Mg(2+) is required as a cofactor.

Its function is as follows. Necessary for normal cell division and for the maintenance of normal septation. In Streptococcus thermophilus (strain CNRZ 1066), this protein is Probable GTP-binding protein EngB.